The chain runs to 674 residues: UvrABC system protein C (674 aa).

Residues Thr16–Val95 form the GIY-YIG domain. One can recognise a UVR domain in the interval Lys207–Val242.

This sequence belongs to the UvrC family. As to quaternary structure, interacts with UvrB in an incision complex.

It localises to the cytoplasm. Functionally, the UvrABC repair system catalyzes the recognition and processing of DNA lesions. UvrC both incises the 5' and 3' sides of the lesion. The N-terminal half is responsible for the 3' incision and the C-terminal half is responsible for the 5' incision. This Pseudarthrobacter chlorophenolicus (strain ATCC 700700 / DSM 12829 / CIP 107037 / JCM 12360 / KCTC 9906 / NCIMB 13794 / A6) (Arthrobacter chlorophenolicus) protein is UvrABC system protein C.